Here is a 1583-residue protein sequence, read N- to C-terminus: Transcriptional activator GLI3 (1583 aa).

Residue M1 is modified to N-acetylmethionine. Polar residues-rich tracts occupy residues 1–10 (MEAQAHSSTA) and 58–78 (ITMQPQSVQGLNKISEEPSTS). Residues 1 to 78 (MEAQAHSSTA…NKISEEPSTS (78 aa)) are disordered. R175 is modified (omega-N-methylarginine). Residues 368 to 475 (QSLGSAFGHS…DKDESKQEPE (108 aa)) are disordered. Low complexity predominate over residues 403–421 (VQVSSGPSESSQSKPTSES). K438 participates in a covalent cross-link: Glycyl lysine isopeptide (Lys-Gly) (interchain with G-Cter in SUMO2). Polar residues predominate over residues 448-457 (SRGQQEQPEG). Residues 461–474 (VKEEADKDESKQEP) show a composition bias toward basic and acidic residues. K462 is covalently cross-linked (Glycyl lysine isopeptide (Lys-Gly) (interchain with G-Cter in SUMO2)). 5 C2H2-type zinc fingers span residues 480–505 (TNCHWEGCTREFDTQDQLVHHINNDH), 513–540 (FVCRWLDCSREQKPFKAQYMLVVHMRRH), 546–570 (HKCTFEGCTKAYSRLENLKTHLRSH), 576–601 (YVCEHEGCNKAFSNASDRAKHQNRTH), and 607–632 (YVCKIPGCTKRYTDPSSLRKHVKTVH). Residues 620-728 (DPSSLRKHVK…PISNYSNSGL (109 aa)) form a disordered region. Over residues 632–648 (HGPEAHVTKKQRGDMHP) the composition is skewed to basic and acidic residues. S664 carries the post-translational modification Phosphoserine. A compositionally biased stretch (basic and acidic residues) spans 684–699 (SKREECLQVKTVKAEK). Positions 703–726 (SQPSPGGQSSCSSQQSPISNYSNS) are enriched in low complexity. The tract at residues 745-845 (DETPIMDSTI…VDFTVLNTLN (101 aa)) is mediates interaction with DZIP1. A Glycyl lysine isopeptide (Lys-Gly) (interchain with G-Cter in ubiquitin) cross-link involves residue K773. K779 is covalently cross-linked (Glycyl lysine isopeptide (Lys-Gly) (interchain with G-Cter in SUMO2); alternate). Residue K779 forms a Glycyl lysine isopeptide (Lys-Gly) (interchain with G-Cter in ubiquitin); alternate linkage. Residues K784 and K800 each participate in a glycyl lysine isopeptide (Lys-Gly) (interchain with G-Cter in ubiquitin) cross-link. The interval 809-828 (GNGTQSNNNYSSGGPGTLLP) is disordered. The span at 810–820 (NGTQSNNNYSS) shows a compositional bias: polar residues. A phosphoserine; by PKA mark is found at S849, S865, S877, S907, S980, and S1006. The segment covering 863-880 (RSSGISPCFSSRRSSEAS) has biased composition (low complexity). Positions 863-918 (RSSGISPCFSSRRSSEASQAEGRPQNVSVADSYDPISTDASRRSSEASQGDGLPSL) are disordered. The tract at residues 1164-1189 (EVSSGTSDLSSSKLKCGQQRPSAQQP) is disordered. The span at 1166–1175 (SSGTSDLSSS) shows a compositional bias: low complexity.

Belongs to the GLI C2H2-type zinc-finger protein family. As to quaternary structure, the phosphorylated form interacts with BTRC. The full-length GLI3 form (GLI3FL) interacts with SUFU and this interaction regulates the formation of either repressor or activator forms of GLI3. Its association with SUFU is regulated by Hh signaling and dissociation of the SUFU-GLI3 interaction requires the presence of the ciliary motor KIF3A. Interacts with KIF7. The activator form of GLI3 (GLI3A) but not the repressor form (GLI3R) can interact with TRPS1. Interacts with ZIC1. Interacts with ZIC3 (via C2H2-type domains 3, 4 and 5); the interaction enhances its transcriptional activity. Interacts with WRD11; the interaction associates EMX1 with GLI3. Interacts with DZIP1; retains GLI3 within the cytoplasm. In terms of processing, phosphorylated by DYRK2 (in vitro). Phosphorylated on multiple sites by protein kinase A (PKA) and phosphorylation by PKA primes further phosphorylation by CK1 and GSK3. Phosphorylation is essential for its proteolytic processing. Post-translationally, transcriptional repressor GLI3R, a C-terminally truncated form, is generated from the full-length GLI3 protein (GLI3FL/GLI3-190) through proteolytic processing. This process requires PKA-primed phosphorylation of GLI3, ubiquitination of GLI3 and the presence of BTRC. GLI3FL is complexed with SUFU in the cytoplasm and is maintained in a neutral state. Without the Hh signal, the SUFU-GLI3 complex is recruited to cilia, leading to the efficient processing of GLI3FL into GLI3R. GLI3R formation leads to its dissociation from SUFU, allowing it to translocate into the nucleus, and repress Hh target genes. When Hh signaling is initiated, SUFU dissociates from GLI3FL and this has two consequences. First, GLI3R production is halted. Second, free GLI3FL translocates to the nucleus, where it is phosphorylated, destabilized, and converted to a transcriptional activator (GLI3A). Phosphorylated in vitro by ULK3.

The protein resides in the nucleus. It localises to the cytoplasm. It is found in the cell projection. The protein localises to the cilium. In terms of biological role, has a dual function as a transcriptional activator and a repressor of the sonic hedgehog (Shh) pathway, and plays a role in limb development. The full-length GLI3 form (GLI3FL) after phosphorylation and nuclear translocation, acts as an activator (GLI3A) while GLI3R, its C-terminally truncated form, acts as a repressor. A proper balance between the GLI3 activator and the repressor GLI3R, rather than the repressor gradient itself or the activator/repressor ratio gradient, specifies limb digit number and identity. In concert with TRPS1, plays a role in regulating the size of the zone of distal chondrocytes, in restricting the zone of PTHLH expression in distal cells and in activating chondrocyte proliferation. Binds to the minimal GLI-consensus sequence 5'-GGGTGGTC-3'. In Mus musculus (Mouse), this protein is Transcriptional activator GLI3 (Gli3).